A 94-amino-acid polypeptide reads, in one-letter code: Citrate lyase acyl carrier protein (94 aa).

Ser14 bears the O-(phosphoribosyl dephospho-coenzyme A)serine mark.

The protein belongs to the CitD family. Oligomer with a subunit composition of (alpha,beta,gamma)6.

The protein resides in the cytoplasm. In terms of biological role, covalent carrier of the coenzyme of citrate lyase. This chain is Citrate lyase acyl carrier protein, found in Halothermothrix orenii (strain H 168 / OCM 544 / DSM 9562).